A 710-amino-acid polypeptide reads, in one-letter code: Ribonuclease R (710 aa).

Residues 246 to 573 form the RNB domain; sequence RKDLRDKVIV…VHRLLKLYLE (328 aa). One can recognise an S1 motif domain in the interval 625–705; it reads GEVFNVVVTN…IRGEIDFVLV (81 aa).

The protein belongs to the RNR ribonuclease family. RNase R subfamily.

It is found in the cytoplasm. It carries out the reaction Exonucleolytic cleavage in the 3'- to 5'-direction to yield nucleoside 5'-phosphates.. Its function is as follows. 3'-5' exoribonuclease that releases 5'-nucleoside monophosphates and is involved in maturation of structured RNAs. The protein is Ribonuclease R of Thermotoga maritima (strain ATCC 43589 / DSM 3109 / JCM 10099 / NBRC 100826 / MSB8).